We begin with the raw amino-acid sequence, 367 residues long: Glutamate 5-kinase (367 aa).

Residue lysine 9 participates in ATP binding. Residues serine 49, aspartate 136, and asparagine 148 each coordinate substrate. ATP-binding positions include 168–169 (TD) and 210–216 (TGGMKSK). Residues 276–350 (SGQIEVDAGA…GMQSQDIQVR (75 aa)) form the PUA domain.

It belongs to the glutamate 5-kinase family.

The protein localises to the cytoplasm. The catalysed reaction is L-glutamate + ATP = L-glutamyl 5-phosphate + ADP. It participates in amino-acid biosynthesis; L-proline biosynthesis; L-glutamate 5-semialdehyde from L-glutamate: step 1/2. Functionally, catalyzes the transfer of a phosphate group to glutamate to form L-glutamate 5-phosphate. In Bacillus cereus (strain G9842), this protein is Glutamate 5-kinase.